Reading from the N-terminus, the 123-residue chain is Small ribosomal subunit protein uS12 (123 aa).

Residues 1-28 (MPTIQQLIRKPREPKRVRSKSQHLESCP) form a disordered region. Position 89 is a 3-methylthioaspartic acid (D89).

Belongs to the universal ribosomal protein uS12 family. In terms of assembly, part of the 30S ribosomal subunit. Contacts proteins S8 and S17. May interact with IF1 in the 30S initiation complex.

Functionally, with S4 and S5 plays an important role in translational accuracy. Its function is as follows. Interacts with and stabilizes bases of the 16S rRNA that are involved in tRNA selection in the A site and with the mRNA backbone. Located at the interface of the 30S and 50S subunits, it traverses the body of the 30S subunit contacting proteins on the other side and probably holding the rRNA structure together. The combined cluster of proteins S8, S12 and S17 appears to hold together the shoulder and platform of the 30S subunit. The polypeptide is Small ribosomal subunit protein uS12 (Cereibacter sphaeroides (strain ATCC 17029 / ATH 2.4.9) (Rhodobacter sphaeroides)).